The chain runs to 97 residues: Putative membrane protein insertion efficiency factor (97 aa).

Residues 72 to 97 form a disordered region; it reads VPGAEPDQEQHQCTPLCNHHSEDHSQ.

The protein belongs to the UPF0161 family.

The protein resides in the cell inner membrane. Its function is as follows. Could be involved in insertion of integral membrane proteins into the membrane. This is Putative membrane protein insertion efficiency factor from Alcanivorax borkumensis (strain ATCC 700651 / DSM 11573 / NCIMB 13689 / SK2).